The chain runs to 217 residues: Small ribosomal subunit protein eS6 (217 aa).

The protein belongs to the eukaryotic ribosomal protein eS6 family.

This Hyperthermus butylicus (strain DSM 5456 / JCM 9403 / PLM1-5) protein is Small ribosomal subunit protein eS6.